Consider the following 594-residue polypeptide: Glutamate decarboxylase 1 (594 aa).

Residues 1–13 (MASSTPSSSATSS) are compositionally biased toward low complexity. A disordered region spans residues 1–23 (MASSTPSSSATSSNAGADPNTTN). S78 is subject to Phosphoserine. 190–192 (QLS) is a binding site for 4-aminobutanoate. An N6-(pyridoxal phosphate)lysine modification is found at K405. R567 contacts 4-aminobutanoate.

The protein belongs to the group II decarboxylase family. As to quaternary structure, homodimer. The cofactor is pyridoxal 5'-phosphate.

The enzyme catalyses L-glutamate + H(+) = 4-aminobutanoate + CO2. Its function is as follows. Catalyzes the synthesis of the inhibitory neurotransmitter gamma-aminobutyric acid (GABA) with pyridoxal 5'-phosphate as cofactor. The polypeptide is Glutamate decarboxylase 1 (GAD1) (Pan troglodytes (Chimpanzee)).